The sequence spans 225 residues: Peptidyl-tRNA hydrolase (225 aa).

Tyr27 contacts tRNA. His32 (proton acceptor) is an active-site residue. TRNA-binding residues include Tyr78, Asn80, and Asn126. The tract at residues 198-225 (FNPLDFSGPDRQDQPAPLNPAKTAPGES) is disordered.

The protein belongs to the PTH family. As to quaternary structure, monomer.

It localises to the cytoplasm. It carries out the reaction an N-acyl-L-alpha-aminoacyl-tRNA + H2O = an N-acyl-L-amino acid + a tRNA + H(+). Functionally, hydrolyzes ribosome-free peptidyl-tRNAs (with 1 or more amino acids incorporated), which drop off the ribosome during protein synthesis, or as a result of ribosome stalling. Its function is as follows. Catalyzes the release of premature peptidyl moieties from peptidyl-tRNA molecules trapped in stalled 50S ribosomal subunits, and thus maintains levels of free tRNAs and 50S ribosomes. In Synechococcus sp. (strain JA-3-3Ab) (Cyanobacteria bacterium Yellowstone A-Prime), this protein is Peptidyl-tRNA hydrolase.